The following is a 327-amino-acid chain: Tagatose 1,6-diphosphate aldolase 2 (327 aa).

It belongs to the aldolase LacD family.

It carries out the reaction D-tagatofuranose 1,6-bisphosphate = D-glyceraldehyde 3-phosphate + dihydroxyacetone phosphate. It functions in the pathway carbohydrate metabolism; D-tagatose 6-phosphate degradation; D-glyceraldehyde 3-phosphate and glycerone phosphate from D-tagatose 6-phosphate: step 2/2. The sequence is that of Tagatose 1,6-diphosphate aldolase 2 (lacD2) from Streptococcus pyogenes serotype M3 (strain ATCC BAA-595 / MGAS315).